Here is a 98-residue protein sequence, read N- to C-terminus: High mobility group nucleosome-binding domain-containing protein 3 (98 aa).

4 stretches are compositionally biased toward basic and acidic residues: residues Met1 to Arg25, Pro39 to Gly52, Gly61 to Lys71, and Gly80 to Glu98. The segment at Met1–Glu98 is disordered.

This sequence belongs to the HMGN family.

The protein localises to the nucleus. The sequence is that of High mobility group nucleosome-binding domain-containing protein 3 (HMGN3) from Gallus gallus (Chicken).